The following is a 135-amino-acid chain: Large ribosomal subunit protein eL32 (135 aa).

A Glycyl lysine isopeptide (Lys-Gly) (interchain with G-Cter in SUMO2) cross-link involves residue lysine 9. Lysine 50 carries the post-translational modification N6-succinyllysine. Serine 62 is subject to Phosphoserine.

Belongs to the eukaryotic ribosomal protein eL32 family. As to quaternary structure, component of the large ribosomal subunit.

The protein resides in the cytoplasm. Component of the large ribosomal subunit. The ribosome is a large ribonucleoprotein complex responsible for the synthesis of proteins in the cell. The sequence is that of Large ribosomal subunit protein eL32 (RPL32) from Oryctolagus cuniculus (Rabbit).